Here is a 409-residue protein sequence, read N- to C-terminus: Microfibrillar-associated protein 3-like (409 aa).

Positions 1–28 (MGLLKSHLTVCLPPSVPFLILVSTLATA) are cleaved as a signal peptide. At 29-148 (KSVTNSTLNG…TLRVIFTSGD (120 aa)) the chain is on the extracellular side. 5 N-linked (GlcNAc...) asparagine glycosylation sites follow: N33, N37, N67, N111, and N135. One can recognise an Ig-like C2-type domain in the interval 47 to 141 (PVIIARTDHI…GTINNTVTLR (95 aa)). A disulfide bridge links C68 with C125. A helical transmembrane segment spans residues 149–169 (MGVYYMVVCLVAFTIVMILNI). Residues 170 to 409 (TRLCMMSSHL…NTCIIYESHV (240 aa)) are Cytoplasmic-facing. Y287 is subject to Phosphotyrosine. Phosphoserine occurs at positions 298, 303, 306, and 307. A disordered region spans residues 319 to 392 (VSVHPQSKKD…LPPAHLETTE (74 aa)). Positions 333–348 (QEGENLEVKDEEETEP) are enriched in acidic residues. Residues 362–372 (DITTTELTSEE) show a composition bias toward polar residues.

The protein localises to the cell membrane. It localises to the nucleus. It is found in the cytoplasm. May participate in the nuclear signaling of EGFR and MAPK1/ERK2. This chain is Microfibrillar-associated protein 3-like (Mfap3l), found in Rattus norvegicus (Rat).